A 273-amino-acid chain; its full sequence is uncharacterized protein (273 aa).

2 helical membrane passes run 24 to 44 and 103 to 123; these read VGVS…VTIL and IVGP…EAWA. A disordered region spans residues 132-194; it reads SDLPHHGRQS…QPPAQTQPYR (63 aa). Positions 164-179 are enriched in basic residues; sequence SSHHIRSPAVARHHKT. The segment covering 183–192 has biased composition (low complexity); sequence TTQPPAQTQP.

The protein localises to the cell membrane. This is an uncharacterized protein from Sinorhizobium fredii (strain NBRC 101917 / NGR234).